A 69-amino-acid polypeptide reads, in one-letter code: Conotoxin LvVID (69 aa).

The first 17 residues, Val-1–Ala-17, serve as a signal peptide directing secretion. The propeptide occupies Glu-18–Thr-40. Disulfide bonds link Cys-43-Cys-57, Cys-50-Cys-61, and Cys-56-Cys-68.

This sequence belongs to the conotoxin O1 superfamily. In terms of tissue distribution, expressed by the venom duct.

The protein resides in the secreted. The sequence is that of Conotoxin LvVID from Conus lividus (Livid cone).